A 254-amino-acid chain; its full sequence is Cytochrome c oxidase subunit 2 (254 aa).

Residues 12–38 (DAPEPWQICYQDSATKIMSGIDKLTGE) are Mitochondrial intermembrane-facing. Residues 39 to 59 (IFYYETLLLIIVGWVLISAII) traverse the membrane as a helical segment. Over 60–73 (KYTKTELSYKYFNH) the chain is Mitochondrial matrix. The helical transmembrane segment at 74–94 (GTLIEILWTCSPAFILIAISF) threads the bilayer. Topologically, residues 95–248 (PSFKLLYLMD…KYLEWLNIHL (154 aa)) are mitochondrial intermembrane. Cu cation-binding residues include His-182, Cys-217, Glu-219, Cys-221, His-225, and Met-228. Glu-219 is a binding site for Mg(2+).

It belongs to the cytochrome c oxidase subunit 2 family. In terms of assembly, component of the cytochrome c oxidase (complex IV, CIV), a multisubunit enzyme composed of a catalytic core of 3 subunits and several supernumerary subunits. The complex exists as a monomer or a dimer and forms supercomplexes (SCs) in the inner mitochondrial membrane with ubiquinol-cytochrome c oxidoreductase (cytochrome b-c1 complex, complex III, CIII). Cu cation serves as cofactor.

The protein localises to the mitochondrion inner membrane. The enzyme catalyses 4 Fe(II)-[cytochrome c] + O2 + 8 H(+)(in) = 4 Fe(III)-[cytochrome c] + 2 H2O + 4 H(+)(out). In terms of biological role, component of the cytochrome c oxidase, the last enzyme in the mitochondrial electron transport chain which drives oxidative phosphorylation. The respiratory chain contains 3 multisubunit complexes succinate dehydrogenase (complex II, CII), ubiquinol-cytochrome c oxidoreductase (cytochrome b-c1 complex, complex III, CIII) and cytochrome c oxidase (complex IV, CIV), that cooperate to transfer electrons derived from NADH and succinate to molecular oxygen, creating an electrochemical gradient over the inner membrane that drives transmembrane transport and the ATP synthase. Cytochrome c oxidase is the component of the respiratory chain that catalyzes the reduction of oxygen to water. Electrons originating from reduced cytochrome c in the intermembrane space (IMS) are transferred via the dinuclear copper A center (CU(A)) of subunit 2 and heme A of subunit 1 to the active site in subunit 1, a binuclear center (BNC) formed by heme A3 and copper B (CU(B)). The BNC reduces molecular oxygen to 2 water molecules using 4 electrons from cytochrome c in the IMS and 4 protons from the mitochondrial matrix. This is Cytochrome c oxidase subunit 2 from Zancudomyces culisetae (Gut fungus).